We begin with the raw amino-acid sequence, 540 residues long: Chaperonin GroEL 2 (540 aa).

Residues 29 to 32, 86 to 90, G413, 476 to 478, and D492 contribute to the ATP site; these read TLGP, DGTTT, and NAA.

Belongs to the chaperonin (HSP60) family. Forms a cylinder of 14 subunits composed of two heptameric rings stacked back-to-back. Interacts with the co-chaperonin GroES.

It localises to the cytoplasm. It carries out the reaction ATP + H2O + a folded polypeptide = ADP + phosphate + an unfolded polypeptide.. Its function is as follows. Together with its co-chaperonin GroES, plays an essential role in assisting protein folding. The GroEL-GroES system forms a nano-cage that allows encapsulation of the non-native substrate proteins and provides a physical environment optimized to promote and accelerate protein folding. This is Chaperonin GroEL 2 from Streptomyces albus G.